The primary structure comprises 293 residues: tRNA-cytidine(32) 2-sulfurtransferase (293 aa).

The short motif at 71–76 is the PP-loop motif element; sequence SGGKDS. C146, C149, and C237 together coordinate [4Fe-4S] cluster.

This sequence belongs to the TtcA family. In terms of assembly, homodimer. The cofactor is Mg(2+). It depends on [4Fe-4S] cluster as a cofactor.

The protein resides in the cytoplasm. It carries out the reaction cytidine(32) in tRNA + S-sulfanyl-L-cysteinyl-[cysteine desulfurase] + AH2 + ATP = 2-thiocytidine(32) in tRNA + L-cysteinyl-[cysteine desulfurase] + A + AMP + diphosphate + H(+). The protein operates within tRNA modification. Its function is as follows. Catalyzes the ATP-dependent 2-thiolation of cytidine in position 32 of tRNA, to form 2-thiocytidine (s(2)C32). The sulfur atoms are provided by the cysteine/cysteine desulfurase (IscS) system. This chain is tRNA-cytidine(32) 2-sulfurtransferase, found in Sinorhizobium medicae (strain WSM419) (Ensifer medicae).